Reading from the N-terminus, the 202-residue chain is MLELYEKRRALLLLRLAAMFLSLAALLITVLNREDGFFSINVFGSPQPILTKATADFTLVKGLKFFAGAMGIVAGYSFLQLAIAMASMFSGAPSILGGKRMAWLCFVGDMTASHLCAAAAAVSAQLAYLGKRGAPMWSAVCTYFSHYCLVFGLAVIFAFLATLAALLVASISSYHLFRLHGILQQQQQQRRQLQQEHVQDKP.

Over 1–10 (MLELYEKRRA) the chain is Cytoplasmic. The chain crosses the membrane as a helical span at residues 11–31 (LLLLRLAAMFLSLAALLITVL). The Extracellular segment spans residues 32 to 64 (NREDGFFSINVFGSPQPILTKATADFTLVKGLK). A helical membrane pass occupies residues 65–85 (FFAGAMGIVAGYSFLQLAIAM). Residues 86–101 (ASMFSGAPSILGGKRM) are Cytoplasmic-facing. A helical transmembrane segment spans residues 102–122 (AWLCFVGDMTASHLCAAAAAV). Residues 123–148 (SAQLAYLGKRGAPMWSAVCTYFSHYC) are Extracellular-facing. A helical transmembrane segment spans residues 149–169 (LVFGLAVIFAFLATLAALLVA). Over 170–202 (SISSYHLFRLHGILQQQQQQRRQLQQEHVQDKP) the chain is Cytoplasmic.

The protein belongs to the Casparian strip membrane proteins (CASP) family. As to quaternary structure, homodimer and heterodimers.

Its subcellular location is the cell membrane. The sequence is that of CASP-like protein 2U7 from Selaginella moellendorffii (Spikemoss).